Consider the following 261-residue polypeptide: tRNA threonylcarbamoyladenosine dehydratase (261 aa).

Residues 230–250 (CANGFGAATMITATFGFFAVS) form a helical membrane-spanning segment.

Belongs to the HesA/MoeB/ThiF family.

It is found in the membrane. Catalyzes the ATP-dependent dehydration of threonylcarbamoyladenosine at position 37 (t(6)A37) to form cyclic t(6)A37 (ct(6)A37) in tRNAs that read codons beginning with adenine. This is tRNA threonylcarbamoyladenosine dehydratase (tcdA) from Haemophilus influenzae (strain ATCC 51907 / DSM 11121 / KW20 / Rd).